The sequence spans 635 residues: Multiple inositol polyphosphate phosphatase 1 (635 aa).

A signal peptide spans Met-1–Ser-23. Residues Leu-24–Ser-565 lie on the Extracellular side of the membrane. Positions Lys-66–Pro-102 are disordered. Over residues Asn-67 to Asn-99 the composition is skewed to low complexity. His-116 is a catalytic residue. Positions Ser-380–Asp-421 are enriched in low complexity. Residues Ser-380–Glu-425 form a disordered region. Residues Tyr-566–Phe-586 form a helical membrane-spanning segment. The Cytoplasmic portion of the chain corresponds to Thr-587–Gln-635. A compositionally biased stretch (low complexity) spans Ser-614–Pro-624. The interval Ser-614 to Gln-635 is disordered.

This sequence belongs to the histidine acid phosphatase family. MINPP1 subfamily.

It localises to the membrane. It carries out the reaction 1D-myo-inositol hexakisphosphate + H2O = 1D-myo-inositol 1,2,4,5,6-pentakisphosphate + phosphate. It catalyses the reaction 1D-myo-inositol 1,2,4,5,6-pentakisphosphate + H2O = 1D-myo-inositol 1,2,5,6-tetrakisphosphate + phosphate. The enzyme catalyses 1D-myo-inositol 1,2,5,6-tetrakisphosphate + H2O = 1D-myo-inositol 1,2,6-trisphosphate + phosphate. The catalysed reaction is 1D-myo-inositol 1,2,6-trisphosphate + H2O = 1D-myo-inositol 1,2-bisphosphate + phosphate. It carries out the reaction 1D-myo-inositol 1,2-bisphosphate + H2O = 1D-myo-inositol 2-phosphate + phosphate. It catalyses the reaction (2R)-2,3-bisphosphoglycerate + H2O = (2R)-2-phosphoglycerate + phosphate. In terms of biological role, probable multiple inositol polyphosphate phosphatase that hydrolyzes 1D-myo-inositol 1,3,4,5,6-pentakisphosphate (InsP5[2OH]) and 1D-myo-inositol hexakisphosphate (InsP6) to a range of less phosphorylated inositol phosphates. This regulates the availability of these various small molecule second messengers and metal chelators which control many aspects of cell physiology. May have a dual substrate specificity, and function as a 2,3-bisphosphoglycerate 3-phosphatase hydrolyzing 2,3-bisphosphoglycerate to 2-phosphoglycerate. 2,3-bisphosphoglycerate (BPG) is formed as part of the Rapoport-Luebering glycolytic bypass. This chain is Multiple inositol polyphosphate phosphatase 1 (mipp1), found in Dictyostelium discoideum (Social amoeba).